Here is a 154-residue protein sequence, read N- to C-terminus: Hemiasterlin resistant protein 1 (154 aa).

Disordered stretches follow at residues 1-64 and 86-109; these read MVRR…PGLM and GMFT…PAGA. 3 stretches are compositionally biased toward low complexity: residues 7 to 28, 48 to 57, and 96 to 109; these read ASPS…SSFA, TPMGAPMGAP, and AEQA…PAGA. A CHCH domain is found at 116 to 154; the sequence is SQPCEFEWRQFVDCAQNQSDVSLCNGFNDIFKQCKARYA. 2 consecutive short sequence motifs (cx9C motif) follow at residues 119-129 and 139-149; these read CEFEWRQFVDC and CNGFNDIFKQC. Cystine bridges form between C119/C149 and C129/C139.

The polypeptide is Hemiasterlin resistant protein 1 (har-1) (Caenorhabditis elegans).